A 450-amino-acid polypeptide reads, in one-letter code: Cyclic GMP-AMP phosphodiesterase SMPDL3A (450 aa).

The signal sequence occupies residues 1–22 (MARLGALVCCLLAAWHCRPGLG). The Zn(2+) site is built by D42 and H44. An intrachain disulfide couples C59 to C78. D107 is a Zn(2+) binding site. H111 is a binding site for ATP. N124 and N128 each carry an N-linked (GlcNAc...) asparagine glycan. N148 contributes to the Zn(2+) binding site. Positions 148 and 149 each coordinate ATP. Residues N219 and N235 are each glycosylated (N-linked (GlcNAc...) asparagine). H249, H290, and H292 together coordinate Zn(2+). N-linked (GlcNAc...) asparagine glycosylation is found at N353 and N370. Cystine bridges form between C417–C421 and C427–C440.

Belongs to the acid sphingomyelinase family. Monomer. Homodimer; homodimerizes following 2',3'-cGAMP-binding. Zn(2+) serves as cofactor.

Its subcellular location is the secreted. It carries out the reaction 2',3'-cGAMP + H2O = 5'-pGpA(2'-5') + H(+). The enzyme catalyses 5'-pGpA(2'-5') + H2O = 5'-GpA(2'-5') + phosphate. It catalyses the reaction a ribonucleoside 5'-triphosphate + H2O = a ribonucleoside 5'-diphosphate + phosphate + H(+). The catalysed reaction is ATP + H2O = ADP + phosphate + H(+). Cyclic-nucleotide phosphodiesterase that acts as a negative regulator of innate immunity by mediating degradation of 2',3'-cGAMP, thereby inhibiting the cGAS-STING signaling. Specifically linearizes 2',3'-cGAMP into 2'5'-bond pGpA and further hydrolyzes pGpA to produce GpA. Also has in vitro nucleotide phosphodiesterase activity with nucleoside triphosphates, such as ATP. Has in vitro activity with p-nitrophenyl-TMP. Has lower activity with nucleoside diphosphates, and no activity with nucleoside monophosphates. Has in vitro activity with CDP-choline, giving rise to CMP and phosphocholine. Has in vitro activity with CDP-ethanolamine. Does not have sphingomyelin phosphodiesterase activity. This chain is Cyclic GMP-AMP phosphodiesterase SMPDL3A (SMPDL3A), found in Bos taurus (Bovine).